A 314-amino-acid chain; its full sequence is Acetyl-coenzyme A carboxylase carboxyl transferase subunit beta, chloroplastic (314 aa).

In terms of domain architecture, CoA carboxyltransferase N-terminal spans 47–314 (LWTRCDNCEN…APWKEKNNQV (268 aa)). 4 residues coordinate Zn(2+): cysteine 51, cysteine 54, cysteine 70, and cysteine 73. Residues 51-73 (CDNCENMLYIKFLKQNKGVCEEC) form a C4-type zinc finger.

Belongs to the AccD/PCCB family. Acetyl-CoA carboxylase is a heterohexamer composed of biotin carboxyl carrier protein, biotin carboxylase and 2 subunits each of ACCase subunit alpha and ACCase plastid-coded subunit beta (accD). It depends on Zn(2+) as a cofactor.

The protein localises to the plastid. It is found in the chloroplast stroma. It carries out the reaction N(6)-carboxybiotinyl-L-lysyl-[protein] + acetyl-CoA = N(6)-biotinyl-L-lysyl-[protein] + malonyl-CoA. Its pathway is lipid metabolism; malonyl-CoA biosynthesis; malonyl-CoA from acetyl-CoA: step 1/1. Component of the acetyl coenzyme A carboxylase (ACC) complex. Biotin carboxylase (BC) catalyzes the carboxylation of biotin on its carrier protein (BCCP) and then the CO(2) group is transferred by the transcarboxylase to acetyl-CoA to form malonyl-CoA. The chain is Acetyl-coenzyme A carboxylase carboxyl transferase subunit beta, chloroplastic from Angiopteris lygodiifolia (Turnip fern).